The following is a 459-amino-acid chain: NADH-ubiquinone oxidoreductase chain 4 (459 aa).

13 consecutive transmembrane segments (helical) span residues 22 to 42, 60 to 80, 94 to 112, 113 to 133, 145 to 165, 196 to 216, 224 to 244, 257 to 277, 284 to 303, 308 to 330, 351 to 371, 391 to 411, and 435 to 455; these read MIWINTTTHSLIISIIPLLFF, PLTTPLLMLTTWLLPLTIMAS, LYLSMLISLQISLIMTFTA, TELIMFYIFFEATLIPTLVII, AGTYFLFYTLVGSLPLLIALI, WLAYTMAFMVKMPLYGLHLWL, PIAGSMMLAAVLLKLGGYGMM, MAYPFLALSLWGMIMTSSISL, SLIAYSSISHMALVVAAILI, SFTGAVVLMIAHGLTSSLLFCLA, LLPLMALWWLLASLANLALPP, TTLLLTGSNMLITALYSLYMF, and ILMFMHLSPILLLSLNPDIIT.

This sequence belongs to the complex I subunit 4 family. As to quaternary structure, core subunit of respiratory chain NADH dehydrogenase (Complex I) which is composed of 45 different subunits.

The protein resides in the mitochondrion inner membrane. The catalysed reaction is a ubiquinone + NADH + 5 H(+)(in) = a ubiquinol + NAD(+) + 4 H(+)(out). Functionally, core subunit of the mitochondrial membrane respiratory chain NADH dehydrogenase (Complex I) which catalyzes electron transfer from NADH through the respiratory chain, using ubiquinone as an electron acceptor. Essential for the catalytic activity and assembly of complex I. In Gorilla gorilla gorilla (Western lowland gorilla), this protein is NADH-ubiquinone oxidoreductase chain 4 (MT-ND4).